A 358-amino-acid polypeptide reads, in one-letter code: Fructose-bisphosphate aldolase 2, cytoplasmic (358 aa).

Residue Arg-39 participates in substrate binding. Glu-183 functions as the Proton acceptor in the catalytic mechanism. The Schiff-base intermediate with dihydroxyacetone-P role is filled by Lys-225. Residues 266-268 (SGG) and Arg-298 each bind substrate.

The protein belongs to the class I fructose-bisphosphate aldolase family. Homotetramer.

The protein resides in the cytoplasm. Its subcellular location is the cytosol. It catalyses the reaction beta-D-fructose 1,6-bisphosphate = D-glyceraldehyde 3-phosphate + dihydroxyacetone phosphate. Its pathway is carbohydrate degradation; glycolysis; D-glyceraldehyde 3-phosphate and glycerone phosphate from D-glucose: step 4/4. Fructose-bisphosphate aldolase that plays a key role in glycolysis and gluconeogenesis. This Oryza sativa subsp. japonica (Rice) protein is Fructose-bisphosphate aldolase 2, cytoplasmic.